The primary structure comprises 198 residues: UPF0312 protein PFL_5802 (198 aa).

A signal peptide spans 1–23; that stretch reads MLKKTLAALAIGSAVLAAGQVMA.

Belongs to the UPF0312 family. Type 1 subfamily.

The protein localises to the periplasm. This chain is UPF0312 protein PFL_5802, found in Pseudomonas fluorescens (strain ATCC BAA-477 / NRRL B-23932 / Pf-5).